A 469-amino-acid polypeptide reads, in one-letter code: 3-isopropylmalate dehydratase large subunit (469 aa).

[4Fe-4S] cluster-binding residues include C350, C410, and C413.

It belongs to the aconitase/IPM isomerase family. LeuC type 1 subfamily. In terms of assembly, heterodimer of LeuC and LeuD. Requires [4Fe-4S] cluster as cofactor.

It catalyses the reaction (2R,3S)-3-isopropylmalate = (2S)-2-isopropylmalate. It functions in the pathway amino-acid biosynthesis; L-leucine biosynthesis; L-leucine from 3-methyl-2-oxobutanoate: step 2/4. Its function is as follows. Catalyzes the isomerization between 2-isopropylmalate and 3-isopropylmalate, via the formation of 2-isopropylmaleate. The sequence is that of 3-isopropylmalate dehydratase large subunit from Sinorhizobium medicae (strain WSM419) (Ensifer medicae).